Consider the following 285-residue polypeptide: Protease HtpX homolog (285 aa).

Helical transmembrane passes span 7–27 (TAMLMAAITALFIVIGGMIGG) and 30–50 (GMTIALVIALGMNFFSYWFSD). Position 131 (His131) interacts with Zn(2+). Glu132 is a catalytic residue. A Zn(2+)-binding site is contributed by His135. The next 2 helical transmembrane spans lie at 141 to 161 (ILISTISATMAGAISALANFA) and 177 to 197 (IAGIAVALLAPIAGALIQMAI). Glu202 serves as a coordination point for Zn(2+).

This sequence belongs to the peptidase M48B family. The cofactor is Zn(2+).

It is found in the cell inner membrane. This Paraburkholderia phytofirmans (strain DSM 17436 / LMG 22146 / PsJN) (Burkholderia phytofirmans) protein is Protease HtpX homolog.